The primary structure comprises 746 residues: NAD(P)H-quinone oxidoreductase subunit 5, chloroplastic (746 aa).

Transmembrane regions (helical) follow at residues 9-29, 40-60, 89-109, 125-145, 147-167, 185-205, 221-241, 258-278, 280-300, 327-347, 354-374, 396-416, 425-445, 547-567, 608-628, and 723-743; these read WIIP…LLLF, WTFL…YLSI, IDPL…LVLI, FAYM…SNLI, VYFF…FWFT, GDFG…SFEF, VNLL…IAKS, TPIS…FLVA, LLPL…IGII, LGYM…FHLI, ALLF…VGYS, TAFL…CFWS, LLFS…TAFY, ILFP…IGIP, FSVS…KPFY, and YLFL…FFYF.

The protein belongs to the complex I subunit 5 family. As to quaternary structure, NDH is composed of at least 16 different subunits, 5 of which are encoded in the nucleus.

It is found in the plastid. Its subcellular location is the chloroplast thylakoid membrane. The catalysed reaction is a plastoquinone + NADH + (n+1) H(+)(in) = a plastoquinol + NAD(+) + n H(+)(out). It catalyses the reaction a plastoquinone + NADPH + (n+1) H(+)(in) = a plastoquinol + NADP(+) + n H(+)(out). NDH shuttles electrons from NAD(P)H:plastoquinone, via FMN and iron-sulfur (Fe-S) centers, to quinones in the photosynthetic chain and possibly in a chloroplast respiratory chain. The immediate electron acceptor for the enzyme in this species is believed to be plastoquinone. Couples the redox reaction to proton translocation, and thus conserves the redox energy in a proton gradient. This chain is NAD(P)H-quinone oxidoreductase subunit 5, chloroplastic (ndhF), found in Crucihimalaya wallichii (Rock-cress).